A 390-amino-acid polypeptide reads, in one-letter code: Endoglucanase gh5-1 (390 aa).

The signal sequence occupies residues 1 to 16; the sequence is MKATILASTFAAGALA. Residues 17–52 enclose the CBM1 domain; sequence QSGAWGQCGGNGWSGATSCISGYACNYVNDWYSQCQ. Asn-157 and Asn-261 each carry an N-linked (GlcNAc...) asparagine glycan.

Belongs to the glycosyl hydrolase 5 (cellulase A) family. Post-translationally, N-glycosylated.

It is found in the secreted. It catalyses the reaction Endohydrolysis of (1-&gt;4)-beta-D-glucosidic linkages in cellulose, lichenin and cereal beta-D-glucans.. Endoglucanase that plays an important role in biomass degradation. Binds onto plant cell walls to participate in the hydrolysis of cellulose. The sequence is that of Endoglucanase gh5-1 from Neurospora crassa (strain ATCC 24698 / 74-OR23-1A / CBS 708.71 / DSM 1257 / FGSC 987).